Reading from the N-terminus, the 485-residue chain is Zinc finger protein 639 (485 aa).

The span at 1 to 14 (MNEYPKKRKRKTLH) shows a compositional bias: basic residues. Positions 1 to 20 (MNEYPKKRKRKTLHPSRYSD) are disordered. Position 60 is a phosphoserine (Ser60). A Glycyl lysine isopeptide (Lys-Gly) (interchain with G-Cter in SUMO2) cross-link involves residue Lys76. A Phosphoserine modification is found at Ser88. Glycyl lysine isopeptide (Lys-Gly) (interchain with G-Cter in SUMO2) cross-links involve residues Lys177, Lys181, and Lys226. C2H2-type zinc fingers lie at residues 204 to 227 (YKCELCEFNSKYFSDLKQHMILKH), 233 to 255 (NVCRVCKESFSTNMLLIEHAKLH), 260 to 283 (YICKYCDYKTVIFENLSQHIADTH), 289 to 311 (YWCEQCDVQFSSSSELYLHFQEH), 374 to 397 (FVCQVCGFRSRLHTNVNRHVAIEH), 403 to 425 (HVCDDCGKGFSSMLEYCKHLNSH), 431 to 454 (YLCQYCEYSTGQIEDLKIHLDFKH), and 460 to 482 (HKCSDCLMRFGNERELISHLPVH). The interaction with CTNNA2 stretch occupies residues 371 to 455 (KNFFVCQVCG…LKIHLDFKHS (85 aa)).

The protein belongs to the krueppel C2H2-type zinc-finger protein family. As to quaternary structure, interacts with CTNNA2.

Its subcellular location is the nucleus. In terms of biological role, binds DNA and may function as a transcriptional repressor. This chain is Zinc finger protein 639 (ZNF639), found in Homo sapiens (Human).